The chain runs to 499 residues: MIKRALISVFDKTGILDLAKFLESRDVEIISTGGTYKHLKENGVKVIDIEEVTGFPEMLDGRVKTLNPLIHGGILAIRDNEEHMKVIEEKGIKPIDMVVVNLYPFFNKVEEDLSFDEKVEFIDIGGPTMIRAAAKNFKDVVVLTDTKDYENVINEIKENNQVNIKTRKKLAGKVFNLMSAYDAAISNFLLEEEYPEYLTLSYKKNMDLRYGENPHQAAAYYTSTVGKYPMKNFEKLNGKELSYNNIKDMDIAWKTVCEFKEVACCALKHNTPCGVAIGDTIQEVYTKAYECDPISIFGGIVAFNRKVDKETAENLIKIFLEIVVAPDFDEDALEVLKTKKNLRVIKCEEKSTQDKDMTKVDGGILVQQSDNKLLEDTKVVTEKSPTEKEMNDLIFGMKVVKYVKSNAIVVIKDGMAKGIGGGQVNRIWAAKEALDRAGDGVVLASDAFFPFGDVAEESAKWGIKAIIQPGGSIRDEESIKVCNEKGISMVFTGVRHFKH.

The MGS-like domain maps to 1–144 (MIKRALISVF…KNFKDVVVLT (144 aa)).

Belongs to the PurH family.

The enzyme catalyses (6R)-10-formyltetrahydrofolate + 5-amino-1-(5-phospho-beta-D-ribosyl)imidazole-4-carboxamide = 5-formamido-1-(5-phospho-D-ribosyl)imidazole-4-carboxamide + (6S)-5,6,7,8-tetrahydrofolate. It catalyses the reaction IMP + H2O = 5-formamido-1-(5-phospho-D-ribosyl)imidazole-4-carboxamide. Its pathway is purine metabolism; IMP biosynthesis via de novo pathway; 5-formamido-1-(5-phospho-D-ribosyl)imidazole-4-carboxamide from 5-amino-1-(5-phospho-D-ribosyl)imidazole-4-carboxamide (10-formyl THF route): step 1/1. The protein operates within purine metabolism; IMP biosynthesis via de novo pathway; IMP from 5-formamido-1-(5-phospho-D-ribosyl)imidazole-4-carboxamide: step 1/1. This chain is Bifunctional purine biosynthesis protein PurH, found in Clostridium botulinum (strain Loch Maree / Type A3).